The primary structure comprises 1175 residues: 1-phosphatidylinositol 4,5-bisphosphate phosphodiesterase beta-4 (1175 aa).

Position 2 is an N-acetylalanine (Ala-2). Positions 313–463 (QEMDHPLAHY…LKRKILIKNK (151 aa)) constitute a PI-PLC X-box domain. Residues His-328 and His-375 contribute to the active site. The tract at residues 487 to 512 (AAPASILEDDNEEEIESADQEEEAHP) is disordered. The span at 493-508 (LEDDNEEEIESADQEE) shows a compositional bias: acidic residues. The PI-PLC Y-box domain maps to 565–681 (LSTMINYAQP…GYLLKPDFMR (117 aa)). The region spanning 684 to 809 (DRTFDPFSET…SLRNEGNKPL (126 aa)) is the C2 domain. Disordered stretches follow at residues 860 to 904 (SDIA…LGSG) and 1082 to 1110 (KISMENSKAISQDKSIKNKAERERRVREL). Composition is skewed to polar residues over residues 885 to 900 (VTPQSSSELRPTTTAA) and 1085 to 1094 (MENSKAISQD). Thr-886 carries the post-translational modification Phosphothreonine. Over residues 1095 to 1109 (KSIKNKAERERRVRE) the composition is skewed to basic and acidic residues.

Ca(2+) is required as a cofactor. In terms of tissue distribution, preferentially expressed in the retina.

The protein localises to the cell membrane. The enzyme catalyses a 1,2-diacyl-sn-glycero-3-phospho-(1D-myo-inositol-4,5-bisphosphate) + H2O = 1D-myo-inositol 1,4,5-trisphosphate + a 1,2-diacyl-sn-glycerol + H(+). The catalysed reaction is a 1,2-diacyl-sn-glycero-3-phospho-(1D-myo-inositol) + H2O = 1D-myo-inositol 1-phosphate + a 1,2-diacyl-sn-glycerol + H(+). Activated phosphatidylinositol-specific phospholipase C enzymes catalyze the production of the second messenger molecules diacylglycerol (DAG) and inositol 1,4,5-trisphosphate (IP3) involved in G-protein coupled receptor signaling pathways. PLCB4 is a direct effector of the endothelin receptor signaling pathway that plays an essential role in lower jaw and middle ear structures development. The sequence is that of 1-phosphatidylinositol 4,5-bisphosphate phosphodiesterase beta-4 from Rattus norvegicus (Rat).